The following is a 153-amino-acid chain: Ribosome maturation factor RimP (153 aa).

Belongs to the RimP family.

The protein resides in the cytoplasm. In terms of biological role, required for maturation of 30S ribosomal subunits. The sequence is that of Ribosome maturation factor RimP from Clostridium tetani (strain Massachusetts / E88).